A 348-amino-acid chain; its full sequence is Phospho-2-dehydro-3-deoxyheptonate aldolase, Trp-sensitive (348 aa).

It belongs to the class-I DAHP synthase family.

The enzyme catalyses D-erythrose 4-phosphate + phosphoenolpyruvate + H2O = 7-phospho-2-dehydro-3-deoxy-D-arabino-heptonate + phosphate. It participates in metabolic intermediate biosynthesis; chorismate biosynthesis; chorismate from D-erythrose 4-phosphate and phosphoenolpyruvate: step 1/7. Its function is as follows. Stereospecific condensation of phosphoenolpyruvate (PEP) and D-erythrose-4-phosphate (E4P) giving rise to 3-deoxy-D-arabino-heptulosonate-7-phosphate (DAHP). This is Phospho-2-dehydro-3-deoxyheptonate aldolase, Trp-sensitive (aroH) from Escherichia coli O6:H1 (strain CFT073 / ATCC 700928 / UPEC).